A 263-amino-acid polypeptide reads, in one-letter code: Putative TATA-binding protein pB263R (263 aa).

This sequence belongs to the asfivirus B263R family.

Its function is as follows. Putative TATA-binding protein. In African swine fever virus (isolate Pig/Kenya/KEN-50/1950) (ASFV), this protein is Putative TATA-binding protein pB263R.